A 373-amino-acid chain; its full sequence is Ferroptosis suppressor protein 1 (373 aa).

Glycine 2 carries N-myristoyl glycine lipidation. Residues 7-27 (VDTGAVHVVIVGGGFGGIAAA) form a helical membrane-spanning segment. 6-hydroxy-FAD contacts are provided by residues 18–22 (GGGFG), arginine 54, and valine 82. Position 168 is an N6-acetyllysine (lysine 168). Aspartate 285 serves as a coordination point for 6-hydroxy-FAD.

Belongs to the FAD-dependent oxidoreductase family. As to quaternary structure, interacts with importin subunits KPNA2 and IPO5; this interaction likely mediates the translocation into the nucleus upon oxidative stress. The cofactor is 6-hydroxy-FAD. N-myristoylation at Gly-2 mediates the recruitment to lipid droplets and plasma membrane. In terms of processing, acetylation at Lys-168 prevents AIFM2 ubiquitination and degradation, thereby inhibiting ferroptosis. KAT2B mediates acetylation at Lys-168, while HDAC3 removes it. Post-translationally, ubiquitinated. AIFM2 undergoes 'Lys-29'-ubiquitination and proteasomal degradation, which is inhibited by acetylation at Lys-168. In terms of tissue distribution, detected in most normal tissues as two transcripts of 1.8 and 4.0 kb in length, respectively. Highly expressed in liver, testis, and kidney, and expressed at lower levels in pancreas, spleen, brain and lung. Expressed in heart (at protein level).

It is found in the lipid droplet. It localises to the cell membrane. The protein localises to the cytoplasm. The protein resides in the mitochondrion membrane. Its subcellular location is the nucleus. The catalysed reaction is ubiquinone-10 + NADH + H(+) = ubiquinol-10 + NAD(+). It carries out the reaction phylloquinone + NADH + H(+) = phylloquinol + NAD(+). It catalyses the reaction menaquinone-4 + NADH + H(+) = menaquinol-4 + NAD(+). The enzyme catalyses menadione + NADH + H(+) = menadiol + NAD(+). With respect to regulation, the modification by 4-hydroxy-2-nonenal (HNE) adduction in mitochondria results in loss of the oxidoreductase activity and activation of a novel function in mitochondrial oxidative stress signaling. Its function is as follows. An NAD(P)H-dependent oxidoreductase that acts as a key inhibitor of ferroptosis. At the plasma membrane, catalyzes reduction of coenzyme Q/ubiquinone-10 to ubiquinol-10, a lipophilic radical-trapping antioxidant that prevents lipid oxidative damage and consequently ferroptosis. Acts in parallel to GPX4 to suppress phospholipid peroxidation and ferroptosis. This anti-ferroptotic function is independent of cellular glutathione levels. Also acts as a potent radical-trapping antioxidant by mediating warfarin-resistant vitamin K reduction in the canonical vitamin K cycle: catalyzes NAD(P)H-dependent reduction of vitamin K (phylloquinone, menaquinone-4 and menadione) to hydroquinone forms. Hydroquinones act as potent radical-trapping antioxidants inhibitor of phospholipid peroxidation and ferroptosis. May play a role in mitochondrial stress signaling. Upon oxidative stress, associates with the lipid peroxidation end product 4-hydroxy-2-nonenal (HNE) forming a lipid adduct devoid of oxidoreductase activity, which then translocates from mitochondria into the nucleus triggering DNA damage and cell death. The chain is Ferroptosis suppressor protein 1 from Mus musculus (Mouse).